The following is a 310-amino-acid chain: Deoxypodophyllotoxin synthase (310 aa).

The Fe2OG dioxygenase domain occupies 159-258 (STNYLLHFMR…RLSTSSFSFP (100 aa)). Fe cation is bound by residues H184, D186, and H239. R249 contacts 2-oxoglutarate.

This sequence belongs to the iron/ascorbate-dependent oxidoreductase family. It depends on Fe(2+) as a cofactor. Mostly expressed in leaves and stems.

The enzyme catalyses (-)-yatein + 2-oxoglutarate + O2 = (-)-deoxypodophyllotoxin + succinate + CO2 + H2O. Its pathway is aromatic compound metabolism; phenylpropanoid biosynthesis. In terms of biological role, 2-oxoglutarate-dependent dioxygenase involved in the biosynthesis of etoposide, a chemotherapeutic compound of the topoisomerase inhibitor family. Catalyzes the conversion of yatein to deoxypodophyllotoxin. Can also use, to some extent, demethylyatein as substrate. The polypeptide is Deoxypodophyllotoxin synthase (Sinopodophyllum hexandrum (Himalayan may apple)).